A 975-amino-acid chain; its full sequence is Exportin-2 (975 aa).

Residues 29–105 enclose the Importin N-terminal domain; it reads AEKLLESTEL…KTLIVTLMLH (77 aa).

Belongs to the XPO2/CSE1 family. In terms of assembly, binds with high affinity to importin-alpha only in the presence of RanGTP.

The protein resides in the cytoplasm. The protein localises to the nucleus. Functionally, export receptor for importin alpha. Mediates importin-alpha re-export from the nucleus to the cytoplasm after import substrates have been released into the nucleoplasm. This chain is Exportin-2, found in Drosophila melanogaster (Fruit fly).